A 179-amino-acid chain; its full sequence is UPF0302 protein BLi02393/BL02764 (179 aa).

Belongs to the UPF0302 family.

The polypeptide is UPF0302 protein BLi02393/BL02764 (Bacillus licheniformis (strain ATCC 14580 / DSM 13 / JCM 2505 / CCUG 7422 / NBRC 12200 / NCIMB 9375 / NCTC 10341 / NRRL NRS-1264 / Gibson 46)).